The sequence spans 229 residues: Large ribosomal subunit protein uL1 (229 aa).

Belongs to the universal ribosomal protein uL1 family. As to quaternary structure, part of the 50S ribosomal subunit.

Binds directly to 23S rRNA. The L1 stalk is quite mobile in the ribosome, and is involved in E site tRNA release. Functionally, protein L1 is also a translational repressor protein, it controls the translation of the L11 operon by binding to its mRNA. The sequence is that of Large ribosomal subunit protein uL1 from Rhodopseudomonas palustris (strain BisB5).